The sequence spans 116 residues: Ly-6/neurotoxin-like protein 1 (116 aa).

The signal sequence occupies residues 1 to 20 (MTPLLTLILVVLMGLPLAQA). Residues 21 to 107 (LDCHVCAYNG…TPATLALAPI (87 aa)) form the UPAR/Ly6 domain. 5 cysteine pairs are disulfide-bonded: Cys23–Cys46, Cys26–Cys33, Cys39–Cys64, Cys68–Cys85, and Cys86–Cys91. Cys91 carries GPI-anchor amidated cysteine lipidation. Residues 92-116 (NGTGLATPATLALAPILLATLWGLL) constitute a propeptide, removed in mature form.

In terms of assembly, interacts with nAChRs containing alpha-4:beta-2 (CHRNA4:CHRNB2) and alpha-7 (CHRNA7) subunits. Interacts with CHRNA4 probably in the endoplasmic reticulum prior to nAChR pentameric assembly. Interacts with KCNA2/Potassium voltage-gated channel subfamily A member 2.

The protein localises to the cell membrane. The protein resides in the cell projection. It localises to the dendrite. Its subcellular location is the endoplasmic reticulum. Functionally, acts in different tissues through interaction to nicotinic acetylcholine receptors (nAChRs). The proposed role as modulator of nAChR activity seems to be dependent on the nAChR subtype and stoichiometry, and to involve an effect on nAChR trafficking and its cell surface expression, and on single channel properties of the nAChR inserted in the plasma membrane. Modulates functional properties of nicotinic acetylcholine receptors (nAChRs) to prevent excessive excitation, and hence neurodegeneration. Enhances desensitization by increasing both the rate and extent of desensitization of alpha-4:beta-2-containing nAChRs and slowing recovery from desensitization. Promotes large amplitude ACh-evoked currents through alpha-4:beta-2 nAChRs. Is involved in regulation of the nAChR pentameric assembly in the endoplasmic reticulum. Shifts stoichiometry from high sensitivity alpha-4(2):beta-2(3) to low sensitivity alpha-4(3):beta-2(2) nAChR. In vitro modulates alpha-3:beta-4-containing nAChRs. Reduces cell surface expression of (alpha-3:beta-4)(2):beta-4 and (alpha-3:beta-4)(2):alpha-5 nAChRs suggesting an interaction with nAChR alpha-3(-):(+)beta-4 subunit interfaces and an allosteric mode. Corresponding single channel effects characterized by decreased unitary conductance, altered burst proportions and enhanced desensitization/inactivation seem to depend on nAChR alpha:alpha subunit interfaces and are greater in (alpha-3:beta-2)(2):alpha-3 when compared to (alpha-3:beta-2)(2):alpha-5 nAChRs. Prevents plasticity in the primary visual cortex late in life. This is Ly-6/neurotoxin-like protein 1 from Homo sapiens (Human).